The following is a 270-amino-acid chain: Thiazole synthase (270 aa).

Catalysis depends on lysine 112, which acts as the Schiff-base intermediate with DXP. 1-deoxy-D-xylulose 5-phosphate is bound by residues glycine 173, 199-200, and 221-222; these read AG and NS.

Belongs to the ThiG family. As to quaternary structure, homotetramer. Forms heterodimers with either ThiH or ThiS.

Its subcellular location is the cytoplasm. It carries out the reaction [ThiS sulfur-carrier protein]-C-terminal-Gly-aminoethanethioate + 2-iminoacetate + 1-deoxy-D-xylulose 5-phosphate = [ThiS sulfur-carrier protein]-C-terminal Gly-Gly + 2-[(2R,5Z)-2-carboxy-4-methylthiazol-5(2H)-ylidene]ethyl phosphate + 2 H2O + H(+). Its pathway is cofactor biosynthesis; thiamine diphosphate biosynthesis. In terms of biological role, catalyzes the rearrangement of 1-deoxy-D-xylulose 5-phosphate (DXP) to produce the thiazole phosphate moiety of thiamine. Sulfur is provided by the thiocarboxylate moiety of the carrier protein ThiS. In vitro, sulfur can be provided by H(2)S. The protein is Thiazole synthase of Pseudomonas entomophila (strain L48).